Reading from the N-terminus, the 300-residue chain is Glutamyl-Q tRNA(Asp) synthetase (300 aa).

L-glutamate-binding positions include 14 to 18 and E50; that span reads RFAPT. The 'HIGH' region motif lies at 17–27; sequence PTPSGFLHFGS. Residues C106, C108, Y120, and C124 each coordinate Zn(2+). L-glutamate is bound by residues Y177 and R195. Residues 233 to 237 carry the 'KMSKS' region motif; sequence KLGKS. Position 236 (K236) interacts with ATP.

It belongs to the class-I aminoacyl-tRNA synthetase family. GluQ subfamily. Zn(2+) is required as a cofactor.

Functionally, catalyzes the tRNA-independent activation of glutamate in presence of ATP and the subsequent transfer of glutamate onto a tRNA(Asp). Glutamate is transferred on the 2-amino-5-(4,5-dihydroxy-2-cyclopenten-1-yl) moiety of the queuosine in the wobble position of the QUC anticodon. In Pseudomonas putida (strain ATCC 700007 / DSM 6899 / JCM 31910 / BCRC 17059 / LMG 24140 / F1), this protein is Glutamyl-Q tRNA(Asp) synthetase.